A 62-amino-acid chain; its full sequence is Small ribosomal subunit protein eS27 (62 aa).

Cys17, Cys20, Cys36, and Cys39 together coordinate Zn(2+). A C4-type zinc finger spans residues 17–39 (CPECNNEQIVFGSPATVVKCLTC).

It belongs to the eukaryotic ribosomal protein eS27 family. In terms of assembly, part of the 30S ribosomal subunit. It depends on Zn(2+) as a cofactor.

This Methanocaldococcus jannaschii (strain ATCC 43067 / DSM 2661 / JAL-1 / JCM 10045 / NBRC 100440) (Methanococcus jannaschii) protein is Small ribosomal subunit protein eS27.